A 629-amino-acid polypeptide reads, in one-letter code: uncharacterized protein (629 aa).

Methionine 1 carries the post-translational modification N-acetylmethionine. The segment at 308-395 (VDPEPEPDPP…PGRRSRARNA (88 aa)) is disordered. The segment covering 322-334 (SANEPASQPNSRS) has biased composition (polar residues). The VWFA domain maps to 451–587 (LVIFVVDASG…VAEGAAAVVV (137 aa)).

It belongs to the Mg-chelatase subunits D/I family.

This is an uncharacterized protein from Mycobacterium tuberculosis (strain ATCC 25618 / H37Rv).